The primary structure comprises 137 residues: MLQPKRTKYRKMHKGRNDGLAWSGNAVSFGEYGLKATAHGQLTARQIEAARRTISRHVKKGGKMWIRVFPDKPITKKPIEVRMGSGKGNVEYWVAQIQPGRMIYEIEGIPEDIAREAFRLAAAKLSVTTTFVTRTVR.

This sequence belongs to the universal ribosomal protein uL16 family. In terms of assembly, part of the 50S ribosomal subunit.

Its function is as follows. Binds 23S rRNA and is also seen to make contacts with the A and possibly P site tRNAs. The chain is Large ribosomal subunit protein uL16 from Xanthomonas campestris pv. campestris (strain 8004).